A 1042-amino-acid polypeptide reads, in one-letter code: Ubiquitin carboxyl-terminal hydrolase 38 (1042 aa).

The USP domain occupies 445-949 (TGLINLGNTC…TAYVLLYKKQ (505 aa)). Cys-454 serves as the catalytic Nucleophile. His-857 (proton acceptor) is an active-site residue.

It belongs to the peptidase C19 family. Interacts with isoform 1 of FBXW7; this interaction prevents FBXW7-mediated degradation of MYC. As to expression, highly expressed in skeletal muscle. Expressed in adrenal gland.

The protein resides in the cytoplasm. It localises to the nucleus. It catalyses the reaction Thiol-dependent hydrolysis of ester, thioester, amide, peptide and isopeptide bonds formed by the C-terminal Gly of ubiquitin (a 76-residue protein attached to proteins as an intracellular targeting signal).. In terms of biological role, deubiquitinating enzyme that plays a role in various cellular processes, including DNA repair, cell cycle regulation, and immune response. Plays a role in the inhibition of type I interferon signaling by mediating the 'Lys-33' to 'Lys-48' ubiquitination transition of TBK1 leading to its degradation. Cleaves the ubiquitin chain from the histone demethylase LSD1/KDM1A and prevents it from degradation by the 26S proteasome, thus maintaining LSD1 protein level in cells. Plays a role in the DNA damage response by regulating the deacetylase activity of HDAC1. Mechanistically, removes the 'Lys-63'-linked ubiquitin chain promoting the deacetylase activity of HDAC1 in response to DNA damage. Also acts as a specific deubiquitinase of histone deacetylase 3/HDAC3 and cleaves its 'Lys-63'-linked ubiquitin chains to lower its histone deacetylase activity. Regulates MYC levels and cell proliferation via antagonizing ubiquitin E3 ligase FBXW7 thereby preventing MYC 'Lys-48'-linked ubiquitination and degradation. Participates in antiviral response by removing both 'Lys-48'-linked and 'Lys-63'-linked polyubiquitination of Zika virus envelope protein E. Constitutively associated with IL-33R/IL1RL1, deconjugates its 'Lys-27'-linked polyubiquitination resulting in its autophagic degradation. The protein is Ubiquitin carboxyl-terminal hydrolase 38 (USP38) of Homo sapiens (Human).